The primary structure comprises 297 residues: Ribonuclease H2 subunit A (297 aa).

The region spanning 21–248 (PCVLGIDEAG…ASTIVEKRCV (228 aa)) is the RNase H type-2 domain. Residues Asp27, Glu28, and Asp138 each coordinate a divalent metal cation.

The protein belongs to the RNase HII family. Eukaryotic subfamily. It depends on Mn(2+) as a cofactor. Mg(2+) is required as a cofactor.

It catalyses the reaction Endonucleolytic cleavage to 5'-phosphomonoester.. In terms of biological role, catalytic subunit of RNase HII, an endonuclease that specifically degrades the RNA of RNA:DNA hybrids. Participates in DNA replication, possibly by mediating the removal of lagging-strand Okazaki fragment RNA primers during DNA replication. Mediates the excision of single ribonucleotides from DNA:RNA duplexes. This is Ribonuclease H2 subunit A (rnh-2) from Caenorhabditis elegans.